A 325-amino-acid polypeptide reads, in one-letter code: Neisseria adhesin A (325 aa).

Positions 1 to 23 (MKHFQSKVLTAAILAALSGSAMA) are cleaved as a signal peptide. The segment at 24–137 (DNPPPSTDEI…NTAAIGENKA (114 aa)) is head domain. A coiled-coil region spans residues 86–135 (LKEVLAQHDQSLADLTGTVDENSEALVKTAEVVNDISADVKANTAAIGEN). Residues 139 to 231 (IAKKADQTAL…LASAEKSITE (93 aa)) are coiled stalk domain. The interval 232–270 (HGTRLNGLDRTVSDLRKETRQGLAEQAALSGLFQPYNVG) is outer membrane translocation of the passenger domain. 4 beta stranded membrane-spanning segments follow: residues 270-280 (GRFNVTAAVGG), 284-295 (ESAVAIGTGFRF), 302-308 (KAGVAVG), and 314-325 (SAAYHVGVNYEW). The tract at residues 271–325 (RFNVTAAVGGYKSESAVAIGTGFRFTENFAAKAGVAVGTSSGSSAAYHVGVNYEW) is translocator domain.

Belongs to the autotransporter-2 (AT-2) (TC 1.B.40) family. As to quaternary structure, homotrimer.

It is found in the cell surface. It localises to the cell outer membrane. In terms of biological role, an antigenic bacterial cell surface protein that adheres to and induces bacterial uptake by human epithelial cells. This chain is Neisseria adhesin A, found in Neisseria meningitidis serogroup B.